Reading from the N-terminus, the 68-residue chain is Large ribosomal subunit protein eL24 (68 aa).

4 residues coordinate Zn(2+): Cys-7, Cys-10, Cys-33, and Cys-37. Residues 7 to 37 form a C4-type zinc finger; it reads CSYCGREFEPGTGKMFVRNDGRVLFFCSSKC.

The protein belongs to the eukaryotic ribosomal protein eL24 family. Part of the 50S ribosomal subunit. Forms a cluster with proteins L3 and L14. Zn(2+) serves as cofactor.

Its function is as follows. Binds to the 23S rRNA. This Thermococcus onnurineus (strain NA1) protein is Large ribosomal subunit protein eL24.